Here is a 310-residue protein sequence, read N- to C-terminus: Sporozoite surface protein P36 (310 aa).

An N-terminal signal peptide occupies residues 1–24 (MRKALYSLLFYMCICLYIYTPVFM). 6-Cys domains follow at residues 25–157 (ANLK…IKKT) and 168–309 (YIKG…STKA). 6 cysteine pairs are disulfide-bonded: Cys38–Cys48, Cys62–Cys137, Cys80–Cys135, Cys172–Cys196, Cys210–Cys291, and Cys227–Cys289. Asn72, Asn114, and Asn118 each carry an N-linked (GlcNAc...) asparagine glycan. Asn290 carries N-linked (GlcNAc...) asparagine glycosylation.

The protein localises to the cell surface. It is found in the cell membrane. Involved in sporozoite infection of hepatocytes and replication therein. In Plasmodium yoelii yoelii, this protein is Sporozoite surface protein P36 (P36).